The sequence spans 259 residues: ATP synthase subunit a (259 aa).

Positions 1 to 7 (MTNNYIN) are cleaved as a propeptide — removed in mature form. The next 5 helical transmembrane spans lie at 36–56 (FSLY…LSIG), 95–115 (YVPL…IGMV), 125–145 (LIYI…LGLF), 164–206 (LVPV…NLVK), and 211–253 (INYF…SYLK).

As to quaternary structure, F-type ATP synthases have 2 components, the catalytic core F(1) and the membrane-embedded component F(0), linked together by a central stalk and a peripheral stalk. The central stalk, also called rotor shaft, is often seen as part of F(1). The peripheral stalk is seen as part of F(0). F(0) contains the membrane channel next to the rotor. F-type ATP synthases form dimers but each monomer functions independently in ATP generation. The dimer consists of 18 different polypeptides: ATP1 (subunit alpha, part of F(1), 3 molecules per monomer), ATP2 (subunit beta, part of F(1), 3 molecules per monomer), ATP3 (subunit gamma, part of the central stalk), ATP4 (subunit b, part of the peripheral stalk), ATP5/OSCP (subunit 5/OSCP, part of the peripheral stalk), ATP6 (subunit a, part of the peripheral stalk), ATP7 (subunit d, part of the peripheral stalk), ATP8 (subunit 8, part of the peripheral stalk), OLI1 (subunit c, part of the rotor, 10 molecules per monomer), ATP14 (subunit h, part of the peripheral stalk), ATP15 (subunit epsilon, part of the central stalk), ATP16 (subunit delta, part of the central stalk), ATP17 (subunit f, part of the peripheral stalk), ATP18 (subunit i/j, part of the peripheral stalk). Dimer-specific subunits are ATP19 (subunit k, at interface between monomers), ATP20 (subunit g, at interface between monomers), TIM11 (subunit e, at interface between monomers). Also contains subunit L.

Its subcellular location is the mitochondrion inner membrane. Functionally, mitochondrial membrane ATP synthase (F(1)F(0) ATP synthase or Complex V) produces ATP from ADP in the presence of a proton gradient across the membrane which is generated by electron transport complexes of the respiratory chain. F-type ATP synthases consist of two structural domains, F(1) - containing the extramembraneous catalytic core, and F(0) - containing the membrane proton channel, linked together by a central stalk and a peripheral stalk. During catalysis, ATP synthesis in the catalytic domain of F(1) is coupled via a rotary mechanism of the central stalk subunits to proton translocation. Key component of the proton channel; it may play a direct role in the translocation of protons across the membrane. In Pichia angusta (Yeast), this protein is ATP synthase subunit a.